Here is a 149-residue protein sequence, read N- to C-terminus: Calmodulin (149 aa).

N-acetylalanine is present on A2. EF-hand domains lie at 8-43, 44-79, 81-116, and 117-149; these read EQIA…LGQN, PTEA…KMKD, DSEE…LGEK, and LTDE…MTTK. The Ca(2+) site is built by D21, D23, D25, T27, E32, D57, D59, N61, T63, E68, D94, D96, N98, and E105. An N6,N6,N6-trimethyllysine modification is found at K116. Ca(2+) contacts are provided by D130, D132, D134, Q136, and E141.

The protein belongs to the calmodulin family. Interacts (in the presence of Ca(2+)) with pde-1, madf-3, rpl-7A, tax-6, efk-1, npp-1, obr-4, sos-1, akt-1, unc-13, tag-196, ugt-48, nmy-2, F27D4.4, ddx-23, efa-6 and R11H6.4.

Calmodulin mediates the control of a large number of enzymes, ion channels and other proteins by Ca(2+). Among the enzymes to be stimulated by the calmodulin-Ca(2+) complex are a number of protein kinases and phosphatases. This is Calmodulin (cmd-1) from Caenorhabditis elegans.